Here is a 291-residue protein sequence, read N- to C-terminus: Nucleotide-binding protein lhv_0732 (291 aa).

13–20 serves as a coordination point for ATP; the sequence is GMSGAGKT. Residue 61-64 coordinates GTP; it reads DLRV.

This sequence belongs to the RapZ-like family.

Displays ATPase and GTPase activities. The chain is Nucleotide-binding protein lhv_0732 from Lactobacillus helveticus (strain DPC 4571).